We begin with the raw amino-acid sequence, 317 residues long: MGNPVDNKFTWVIKNFCSVSPKPIYSDQFLIGGNKWHILAYSKKRDGHQFLCLDLELVDCEFLPSEWRKVVKVSFTVVNFFSKKLSRQIGLKHCFNKKERSKGGSLFHLSELTDKKSGFLVDGEVEIVAQITVLETDRRFHVSKDYNMEMQCWDGMATTLVENKELNDDDKAGLVNVKGFQVLPSQLGIVNRIFEKHPETALECCTKNQELRASYINVIFSLIKLLYKGAQEHSTHDLSDAEGALAYMKNLGFKLDWLEKKLDEVKEIKKKCERVTEMEKELHDLMNKHTNVSKLLEKEKLEIKNASAPDLSFSDVI.

The 126-residue stretch at 6–131 (DNKFTWVIKN…DGEVEIVAQI (126 aa)) folds into the MATH domain. Positions 254–305 (KLDWLEKKLDEVKEIKKKCERVTEMEKELHDLMNKHTNVSKLLEKEKLEIKN) form a coiled coil.

This chain is MATH domain and coiled-coil domain-containing protein At3g58240, found in Arabidopsis thaliana (Mouse-ear cress).